The primary structure comprises 161 residues: Respiratory growth induced protein 1 (161 aa).

Lys68 participates in a covalent cross-link: Glycyl lysine isopeptide (Lys-Gly) (interchain with G-Cter in ubiquitin).

Belongs to the RGI1 family.

The protein resides in the cell membrane. In terms of biological role, involved in the control of energetic metabolism and significantly contribute to cell fitness, especially under respiratory growth conditions. This Saccharomyces cerevisiae (strain RM11-1a) (Baker's yeast) protein is Respiratory growth induced protein 1 (RGI1).